The chain runs to 40 residues: Dolichyl-diphosphooligosaccharide--protein glycosyltransferase subunit 4 (40 aa).

The Lumenal segment spans residues 1-4; it reads MITD. The helical transmembrane segment at 5–25 threads the bilayer; sequence VQLAIFSNVLGVFLFLLVVAY. Residues 26-40 are Cytoplasmic-facing; it reads HYINANTGKPSAKAK.

This sequence belongs to the OST4 family. As to quaternary structure, component of the oligosaccharyltransferase (OST) complex.

It localises to the endoplasmic reticulum membrane. Subunit of the oligosaccharyl transferase (OST) complex that catalyzes the initial transfer of a defined glycan (Glc(3)Man(9)GlcNAc(2) in eukaryotes) from the lipid carrier dolichol-pyrophosphate to an asparagine residue within an Asn-X-Ser/Thr consensus motif in nascent polypeptide chains, the first step in protein N-glycosylation. N-glycosylation occurs cotranslationally and the complex associates with the Sec61 complex at the channel-forming translocon complex that mediates protein translocation across the endoplasmic reticulum (ER). All subunits are required for a maximal enzyme activity. The protein is Dolichyl-diphosphooligosaccharide--protein glycosyltransferase subunit 4 of Drosophila erecta (Fruit fly).